The following is a 127-amino-acid chain: Large ribosomal subunit protein bL17 (127 aa).

It belongs to the bacterial ribosomal protein bL17 family. Part of the 50S ribosomal subunit. Contacts protein L32.

This chain is Large ribosomal subunit protein bL17, found in Leuconostoc mesenteroides subsp. mesenteroides (strain ATCC 8293 / DSM 20343 / BCRC 11652 / CCM 1803 / JCM 6124 / NCDO 523 / NBRC 100496 / NCIMB 8023 / NCTC 12954 / NRRL B-1118 / 37Y).